Reading from the N-terminus, the 450-residue chain is Thiamine biosynthesis regulatory protein (450 aa).

Residues 1-12 (MVNSKRQQRSKK) are compositionally biased toward basic residues. The tract at residues 1-23 (MVNSKRQQRSKKVASSSKVPPTK) is disordered. The span at 13–23 (VASSSKVPPTK) shows a compositional bias: low complexity. The zn(2)-C6 fungal-type DNA-binding region spans 30-57 (CWACRFKKRRCDENRPICSLCAKHGDNC). Residues 210 to 234 (TDQLPSPGHSMSSAEETTTAALSSP) are disordered.

The protein localises to the nucleus. Positive regulator of thiamine biosynthesis. The polypeptide is Thiamine biosynthesis regulatory protein (THI2) (Saccharomyces cerevisiae (strain ATCC 204508 / S288c) (Baker's yeast)).